We begin with the raw amino-acid sequence, 444 residues long: tRNA-2-methylthio-N(6)-dimethylallyladenosine synthase (444 aa).

The MTTase N-terminal domain occupies 3–117; it reads RGLYIESYGC…LPELIMKVKR (115 aa). [4Fe-4S] cluster is bound by residues Cys12, Cys48, Cys80, Cys155, Cys159, and Cys162. The Radical SAM core domain occupies 141 to 374; that stretch reads ANGGVSAYVS…LLTKQQLQFN (234 aa). The TRAM domain maps to 375 to 441; it reads KSMEGRVMDV…QNSLEGTVLS (67 aa).

Belongs to the methylthiotransferase family. MiaB subfamily. Monomer. The cofactor is [4Fe-4S] cluster.

Its subcellular location is the cytoplasm. It catalyses the reaction N(6)-dimethylallyladenosine(37) in tRNA + (sulfur carrier)-SH + AH2 + 2 S-adenosyl-L-methionine = 2-methylsulfanyl-N(6)-dimethylallyladenosine(37) in tRNA + (sulfur carrier)-H + 5'-deoxyadenosine + L-methionine + A + S-adenosyl-L-homocysteine + 2 H(+). Functionally, catalyzes the methylthiolation of N6-(dimethylallyl)adenosine (i(6)A), leading to the formation of 2-methylthio-N6-(dimethylallyl)adenosine (ms(2)i(6)A) at position 37 in tRNAs that read codons beginning with uridine. This Anaplasma phagocytophilum (strain HZ) protein is tRNA-2-methylthio-N(6)-dimethylallyladenosine synthase.